The sequence spans 691 residues: Elongation factor G (691 aa).

The 275-residue stretch at 8-282 folds into the tr-type G domain; that stretch reads ERVRNIGIAA…AVVNYLPAPV (275 aa). GTP contacts are provided by residues 17–24, 81–85, and 135–138; these read AHIDAGKT, DTPGH, and NKMD.

Belongs to the TRAFAC class translation factor GTPase superfamily. Classic translation factor GTPase family. EF-G/EF-2 subfamily.

The protein resides in the cytoplasm. Catalyzes the GTP-dependent ribosomal translocation step during translation elongation. During this step, the ribosome changes from the pre-translocational (PRE) to the post-translocational (POST) state as the newly formed A-site-bound peptidyl-tRNA and P-site-bound deacylated tRNA move to the P and E sites, respectively. Catalyzes the coordinated movement of the two tRNA molecules, the mRNA and conformational changes in the ribosome. The protein is Elongation factor G of Prochlorococcus marinus (strain NATL1A).